The chain runs to 423 residues: Oligopeptide transport ATP-binding protein OppD (423 aa).

Positions 24–309 (IRDLHVSFKV…PVHPYTWALM (286 aa)) constitute an ABC transporter domain. 58 to 65 (GESGSGKS) contributes to the ATP binding site. The disordered stretch occupies residues 398 to 423 (AIKMPSQPVKQPKSNGNKKTKTKSAR). A compositionally biased stretch (basic residues) spans 413-423 (GNKKTKTKSAR).

Belongs to the ABC transporter superfamily. The complex is composed of two ATP-binding proteins (OppD and OppF), two transmembrane proteins (OppB and OppC) and a solute-binding protein (OppA).

The protein localises to the cell membrane. The enzyme catalyses a [peptide](out) + ATP + H2O = a [peptide](in) + ADP + phosphate + H(+). Part of the ABC transporter complex OppABCDF involved in the uptake of oligopeptides. Probably responsible for energy coupling to the transport system. This Mycoplasma pneumoniae (strain ATCC 29342 / M129 / Subtype 1) (Mycoplasmoides pneumoniae) protein is Oligopeptide transport ATP-binding protein OppD (oppD).